The primary structure comprises 450 residues: 3-phosphoshikimate 1-carboxyvinyltransferase (450 aa).

3-phosphoshikimate is bound by residues lysine 28, serine 29, and arginine 33. Lysine 28 serves as a coordination point for phosphoenolpyruvate. 2 residues coordinate phosphoenolpyruvate: glycine 100 and arginine 128. 4 residues coordinate 3-phosphoshikimate: serine 173, glutamine 175, aspartate 326, and lysine 353. A phosphoenolpyruvate-binding site is contributed by glutamine 175. The Proton acceptor role is filled by aspartate 326. Positions 357 and 402 each coordinate phosphoenolpyruvate.

This sequence belongs to the EPSP synthase family. In terms of assembly, monomer.

The protein resides in the cytoplasm. The catalysed reaction is 3-phosphoshikimate + phosphoenolpyruvate = 5-O-(1-carboxyvinyl)-3-phosphoshikimate + phosphate. It participates in metabolic intermediate biosynthesis; chorismate biosynthesis; chorismate from D-erythrose 4-phosphate and phosphoenolpyruvate: step 6/7. In terms of biological role, catalyzes the transfer of the enolpyruvyl moiety of phosphoenolpyruvate (PEP) to the 5-hydroxyl of shikimate-3-phosphate (S3P) to produce enolpyruvyl shikimate-3-phosphate and inorganic phosphate. This chain is 3-phosphoshikimate 1-carboxyvinyltransferase, found in Brucella abortus biovar 1 (strain 9-941).